The primary structure comprises 116 residues: Transcription elongation factor SPT4 homolog 2 (116 aa).

The segment at 19–39 (CLRCRLVKTYDQFRDAGCENC) adopts a C4-type zinc-finger fold.

It belongs to the SPT4 family.

It is found in the nucleus. May regulate transcription elongation by RNA polymerase II. May enhance transcriptional pausing at sites proximal to the promoter, which may in turn facilitate the assembly of an elongation competent RNA polymerase II complex. The polypeptide is Transcription elongation factor SPT4 homolog 2 (Arabidopsis thaliana (Mouse-ear cress)).